Here is a 220-residue protein sequence, read N- to C-terminus: UPF0319 protein YccT (220 aa).

Positions 1 to 20 (MKAGTLTLLIALCLPISVSA) are cleaved as a signal peptide.

This sequence belongs to the UPF0319 family.

This chain is UPF0319 protein YccT, found in Escherichia fergusonii (strain ATCC 35469 / DSM 13698 / CCUG 18766 / IAM 14443 / JCM 21226 / LMG 7866 / NBRC 102419 / NCTC 12128 / CDC 0568-73).